The primary structure comprises 86 residues: Weak neurotoxin 8 (86 aa).

The first 21 residues, 1 to 21 (MKTLLLTLVVVTIVCLDLGYT), serve as a signal peptide directing secretion. 5 disulfide bridges follow: Cys-24–Cys-45, Cys-27–Cys-32, Cys-38–Cys-63, Cys-67–Cys-78, and Cys-79–Cys-84.

It belongs to the three-finger toxin family. Ancestral subfamily. Orphan group II sub-subfamily. Expressed by the venom gland.

It localises to the secreted. Binds with low affinity to muscular (alpha-1-beta-1-delta-epsilon/CHRNA1-CHRNB1-CHRND-CHRNE) and very low affinity to neuronal (alpha-7/CHRNA7) nicotinic acetylcholine receptor (nAChR). This is Weak neurotoxin 8 from Naja sputatrix (Malayan spitting cobra).